Consider the following 235-residue polypeptide: Phosphoribosylaminoimidazole-succinocarboxamide synthase (235 aa).

Belongs to the SAICAR synthetase family.

It catalyses the reaction 5-amino-1-(5-phospho-D-ribosyl)imidazole-4-carboxylate + L-aspartate + ATP = (2S)-2-[5-amino-1-(5-phospho-beta-D-ribosyl)imidazole-4-carboxamido]succinate + ADP + phosphate + 2 H(+). It participates in purine metabolism; IMP biosynthesis via de novo pathway; 5-amino-1-(5-phospho-D-ribosyl)imidazole-4-carboxamide from 5-amino-1-(5-phospho-D-ribosyl)imidazole-4-carboxylate: step 1/2. The sequence is that of Phosphoribosylaminoimidazole-succinocarboxamide synthase from Streptococcus mutans serotype c (strain ATCC 700610 / UA159).